We begin with the raw amino-acid sequence, 33 residues long: Brevinin-2HSa (33 aa).

C27 and C33 are oxidised to a cystine.

Expressed by the skin glands.

Its subcellular location is the secreted. Its function is as follows. Has antibacterial activity against the Gram-positive bacterium S.aureus ATCC 25923 (MIC=18 uM) and the Gram-negative bacterium E.coli ATCC 25726 (MIC=36 uM). This Odorrana hosii (Hose's rock frog) protein is Brevinin-2HSa.